We begin with the raw amino-acid sequence, 189 residues long: Putative dihydrofolate reductase (189 aa).

The DHFR domain maps to 3–185 (KMNLIVAMDA…LKFEFCKWKV (183 aa)). NADP(+) is bound by residues A9 and 15 to 21 (GIGKNGV). 29–34 (DMQYFA) contributes to the substrate binding site. 53–55 (RKC) contributes to the NADP(+) binding site. R69 is a substrate binding site. Residues 75 to 77 (SRQ) and 115 to 122 (GGAEIYDL) contribute to the NADP(+) site.

It belongs to the dihydrofolate reductase family.

It catalyses the reaction (6S)-5,6,7,8-tetrahydrofolate + NADP(+) = 7,8-dihydrofolate + NADPH + H(+). It participates in cofactor biosynthesis; tetrahydrofolate biosynthesis; 5,6,7,8-tetrahydrofolate from 7,8-dihydrofolate: step 1/1. Its function is as follows. Key enzyme in folate metabolism. Catalyzes an essential reaction for de novo glycine and purine synthesis, and for DNA precursor synthesis. The polypeptide is Putative dihydrofolate reductase (dhfr-1) (Caenorhabditis elegans).